Reading from the N-terminus, the 303-residue chain is Protoheme IX farnesyltransferase (303 aa).

Transmembrane regions (helical) follow at residues M25–M45, I54–L74, L104–I124, P125–S145, W151–I171, A179–I199, F227–F247, V248–K268, and F280–L300.

The protein belongs to the UbiA prenyltransferase family. Protoheme IX farnesyltransferase subfamily. Interacts with CtaA.

The protein resides in the cell membrane. The enzyme catalyses heme b + (2E,6E)-farnesyl diphosphate + H2O = Fe(II)-heme o + diphosphate. It participates in porphyrin-containing compound metabolism; heme O biosynthesis; heme O from protoheme: step 1/1. Its function is as follows. Converts heme B (protoheme IX) to heme O by substitution of the vinyl group on carbon 2 of heme B porphyrin ring with a hydroxyethyl farnesyl side group. In Staphylococcus aureus (strain Mu3 / ATCC 700698), this protein is Protoheme IX farnesyltransferase.